Reading from the N-terminus, the 362-residue chain is Probable RNA methyltransferase Tbd_1951 (362 aa).

E89 functions as the Proton acceptor in the catalytic mechanism. The region spanning 92-318 (LLPRDGVCVS…AKLRHSAGQD (227 aa)) is the Radical SAM core domain. C99 and C323 are joined by a disulfide. The [4Fe-4S] cluster site is built by C106, C110, and C113. S-adenosyl-L-methionine-binding positions include 151–152 (GE), S181, 204–206 (SLH), and N280. C323 functions as the S-methylcysteine intermediate in the catalytic mechanism. Residues 342–362 (LPSAETPAASPKAAASIGFPG) form a disordered region. Residues 343 to 362 (PSAETPAASPKAAASIGFPG) are compositionally biased toward low complexity.

Belongs to the radical SAM superfamily. RlmN family. [4Fe-4S] cluster is required as a cofactor.

Its subcellular location is the cytoplasm. This Thiobacillus denitrificans (strain ATCC 25259 / T1) protein is Probable RNA methyltransferase Tbd_1951.